Reading from the N-terminus, the 228-residue chain is Non-fluorescent flavoprotein (228 aa).

Belongs to the bacterial luciferase oxidoreductase family. In terms of assembly, homodimer. The cofactor is FMN.

The protein is Non-fluorescent flavoprotein (luxF) of Photobacterium leiognathi.